The sequence spans 428 residues: Dihydroorotase (428 aa).

2 residues coordinate Zn(2+): His59 and His61. Substrate is bound by residues 61–63 and Asn93; that span reads HLR. 3 residues coordinate Zn(2+): Asp151, His178, and His231. A substrate-binding site is contributed by Asn277. Position 304 (Asp304) interacts with Zn(2+). The active site involves Asp304. Residues His308 and 322 to 323 each bind substrate; that span reads FG.

This sequence belongs to the metallo-dependent hydrolases superfamily. DHOase family. Class I DHOase subfamily. It depends on Zn(2+) as a cofactor.

It carries out the reaction (S)-dihydroorotate + H2O = N-carbamoyl-L-aspartate + H(+). It participates in pyrimidine metabolism; UMP biosynthesis via de novo pathway; (S)-dihydroorotate from bicarbonate: step 3/3. Functionally, catalyzes the reversible cyclization of carbamoyl aspartate to dihydroorotate. The polypeptide is Dihydroorotase (Bacillus cereus (strain B4264)).